Here is a 208-residue protein sequence, read N- to C-terminus: Holliday junction resolvase RecU (208 aa).

Thr-86, Asp-88, Glu-101, and Gln-120 together coordinate Mg(2+).

Belongs to the RecU family. The cofactor is Mg(2+).

The protein localises to the cytoplasm. The catalysed reaction is Endonucleolytic cleavage at a junction such as a reciprocal single-stranded crossover between two homologous DNA duplexes (Holliday junction).. In terms of biological role, endonuclease that resolves Holliday junction intermediates in genetic recombination. Cleaves mobile four-strand junctions by introducing symmetrical nicks in paired strands. Promotes annealing of linear ssDNA with homologous dsDNA. Required for DNA repair, homologous recombination and chromosome segregation. The chain is Holliday junction resolvase RecU from Lacticaseibacillus casei (strain BL23) (Lactobacillus casei).